Reading from the N-terminus, the 132-residue chain is D-ribose pyranase (132 aa).

His-20 (proton donor) is an active-site residue. Substrate is bound by residues Asp-28, His-99, and 121 to 123 (YAN).

The protein belongs to the RbsD / FucU family. RbsD subfamily. In terms of assembly, homodecamer.

The protein localises to the cytoplasm. The enzyme catalyses beta-D-ribopyranose = beta-D-ribofuranose. It participates in carbohydrate metabolism; D-ribose degradation; D-ribose 5-phosphate from beta-D-ribopyranose: step 1/2. Its function is as follows. Catalyzes the interconversion of beta-pyran and beta-furan forms of D-ribose. This is D-ribose pyranase from Variovorax paradoxus (strain S110).